Here is a 230-residue protein sequence, read N- to C-terminus: Urease accessory protein UreF (230 aa).

The protein belongs to the UreF family. UreD, UreF and UreG form a complex that acts as a GTP-hydrolysis-dependent molecular chaperone, activating the urease apoprotein by helping to assemble the nickel containing metallocenter of UreC. The UreE protein probably delivers the nickel.

The protein resides in the cytoplasm. Functionally, required for maturation of urease via the functional incorporation of the urease nickel metallocenter. This chain is Urease accessory protein UreF, found in Cupriavidus pinatubonensis (strain JMP 134 / LMG 1197) (Cupriavidus necator (strain JMP 134)).